The primary structure comprises 700 residues: Methionine--tRNA ligase (700 aa).

The 'HIGH' region signature appears at 13–23; that stretch reads PYANGDIHLGH. The Zn(2+) site is built by cysteine 144, cysteine 147, cysteine 157, and cysteine 160. The 'KMSKS' region motif lies at 341 to 345; it reads KMSKS. Lysine 344 contributes to the ATP binding site. A disordered region spans residues 562-587; that stretch reads QVGAPTASQDDKAAAKNTSPAAMPSS. Over residues 577 to 587 the composition is skewed to polar residues; the sequence is KNTSPAAMPSS. The region spanning 598-700 is the tRNA-binding domain; that stretch reads DFAKVEMKVA…DEAVIGDSLA (103 aa).

The protein belongs to the class-I aminoacyl-tRNA synthetase family. MetG type 1 subfamily. In terms of assembly, homodimer. Zn(2+) serves as cofactor.

The protein localises to the cytoplasm. The catalysed reaction is tRNA(Met) + L-methionine + ATP = L-methionyl-tRNA(Met) + AMP + diphosphate. Is required not only for elongation of protein synthesis but also for the initiation of all mRNA translation through initiator tRNA(fMet) aminoacylation. This Psychrobacter cryohalolentis (strain ATCC BAA-1226 / DSM 17306 / VKM B-2378 / K5) protein is Methionine--tRNA ligase.